Here is a 363-residue protein sequence, read N- to C-terminus: Putative dipeptidase YkvY (363 aa).

Mn(2+) contacts are provided by Asp222, Asp233, His297, Glu326, and Glu340.

This sequence belongs to the peptidase M24B family. Requires Mn(2+) as cofactor.

This is Putative dipeptidase YkvY (ykvY) from Bacillus subtilis (strain 168).